Reading from the N-terminus, the 420-residue chain is Tyrosine--tRNA ligase (420 aa).

Tyrosine 36 provides a ligand contact to L-tyrosine. Positions 41–50 (PTADSLHIGH) match the 'HIGH' region motif. 2 residues coordinate L-tyrosine: tyrosine 170 and glutamine 174. The 'KMSKS' region signature appears at 231–235 (KFGKS). Lysine 234 contacts ATP. The S4 RNA-binding domain occupies 353-420 (TNIVEVLIET…KKKYFMVNYQ (68 aa)).

Belongs to the class-I aminoacyl-tRNA synthetase family. TyrS type 1 subfamily. In terms of assembly, homodimer.

It localises to the cytoplasm. It catalyses the reaction tRNA(Tyr) + L-tyrosine + ATP = L-tyrosyl-tRNA(Tyr) + AMP + diphosphate + H(+). In terms of biological role, catalyzes the attachment of tyrosine to tRNA(Tyr) in a two-step reaction: tyrosine is first activated by ATP to form Tyr-AMP and then transferred to the acceptor end of tRNA(Tyr). The chain is Tyrosine--tRNA ligase from Staphylococcus aureus (strain COL).